We begin with the raw amino-acid sequence, 356 residues long: Phosphotriesterase-related protein (356 aa).

H23, H25, E175, H207, H236, and D304 together coordinate a divalent metal cation.

The protein belongs to the metallo-dependent hydrolases superfamily. Phosphotriesterase family. The cofactor is a divalent metal cation.

This chain is Phosphotriesterase-related protein, found in Aedes aegypti (Yellowfever mosquito).